Reading from the N-terminus, the 91-residue chain is Small ribosomal subunit protein uS19 (91 aa).

It belongs to the universal ribosomal protein uS19 family.

Its function is as follows. Protein S19 forms a complex with S13 that binds strongly to the 16S ribosomal RNA. The polypeptide is Small ribosomal subunit protein uS19 (Synechococcus sp. (strain RCC307)).